A 1100-amino-acid polypeptide reads, in one-letter code: SLIT-ROBO Rho GTPase-activating protein 2 (1100 aa).

In terms of domain architecture, F-BAR spans 19–324 (TQVKEIRAQL…AAENLEANSD (306 aa)). Coiled coils occupy residues 170-201 (YNMD…HEEK) and 363-400 (GELI…IQDM). A compositionally biased stretch (basic and acidic residues) spans 181 to 203 (LKEAEKQEEKQMSRSVRHEEKQT). A disordered region spans residues 181–210 (LKEAEKQEEKQMSRSVRHEEKQTPRSPDSL). The region spanning 496-680 (VRKQEAIQII…TIIIHHESIF (185 aa)) is the Rho-GAP domain. The region spanning 738–797 (SDPIEAIARFDYSGRTNRELSFKKGASLLLYSRASDDWWEGRHNGTEGLVPHQYIVVQDM) is the SH3 domain. Disordered stretches follow at residues 800-835 (GYAG…TGGH) and 852-938 (EATS…PLDP). Basic and acidic residues predominate over residues 807-823 (PKADLEGSHDSVEEKVS). Residues 919-932 (RKSTPTGRSKSFSN) are compositionally biased toward polar residues. The stretch at 945–972 (EHSSQDIEATMNTALSELRELERQSNVK) forms a coiled coil. Residues 986–1100 (KSGGTSEPSS…PPPTDKSCPV (115 aa)) are disordered. Polar residues-rich tracts occupy residues 987–997 (SGGTSEPSSPL) and 1008–1049 (SQHP…GSTF). Residues 1067–1081 (SSSAGGSPAMGSPTT) are compositionally biased toward low complexity. Pro residues predominate over residues 1082 to 1094 (TIPPTPPPPPPPT).

Its subcellular location is the cell membrane. It is found in the cell projection. It localises to the dendritic spine. The protein localises to the postsynaptic density. The protein resides in the postsynaptic cell membrane. Its subcellular location is the lamellipodium. It is found in the cytoplasmic vesicle. It localises to the phagosome. The protein localises to the nucleus. The protein resides in the cytoplasm. Its subcellular location is the cytosol. Its function is as follows. Postsynaptic RAC1 GTPase activating protein (GAP) that plays a key role in neuronal morphogenesis and migration mainly during development of the cerebral cortex. Regulates excitatory and inhibitory synapse maturation and density in cortical pyramidal neurons. Mechanistically, acts by binding and deforming membranes, thereby regulating actin dynamics to regulate cell migration and differentiation. The protein is SLIT-ROBO Rho GTPase-activating protein 2 (srgap2) of Danio rerio (Zebrafish).